A 171-amino-acid chain; its full sequence is Flavodoxin (171 aa).

A Flavodoxin-like domain is found at 4 to 166 (IGLFVGTTTG…RIKEWVKQLK (163 aa)).

The protein belongs to the flavodoxin family. It depends on FMN as a cofactor.

Its function is as follows. Low-potential electron donor to a number of redox enzymes. The chain is Flavodoxin (fld) from Trichodesmium erythraeum (strain IMS101).